The primary structure comprises 50 residues: Light-harvesting protein B-870 beta chain (50 aa).

Residues 2-22 (ADNTDLSFTGLTDEQAQELHS) are Cytoplasmic-facing. 2 residues coordinate a bacteriochlorophyll: histidine 21 and histidine 39. Residues 23 to 45 (VYMSGLFLFAAVAVVAHLATYIW) traverse the membrane as a helical segment. Topologically, residues 46–50 (RPWFG) are periplasmic.

Belongs to the antenna complex beta subunit family. The core complex is formed by different alpha and beta chains, binding bacteriochlorophyll molecules, and arranged most probably in tetrameric structures disposed around the reaction center. The non-pigmented gamma chains may constitute additional components.

The protein localises to the cell inner membrane. Its function is as follows. Antenna complexes are light-harvesting systems, which transfer the excitation energy to the reaction centers. The polypeptide is Light-harvesting protein B-870 beta chain (pufB) (Roseobacter denitrificans (strain ATCC 33942 / OCh 114) (Erythrobacter sp. (strain OCh 114))).